A 335-amino-acid polypeptide reads, in one-letter code: Glycerol-3-phosphate dehydrogenase [NAD(P)+] (335 aa).

NADPH contacts are provided by F11, R31, and K107. K107 and G135 together coordinate sn-glycerol 3-phosphate. An NADPH-binding site is contributed by A139. Sn-glycerol 3-phosphate is bound by residues K190, D245, S255, R256, and N257. The Proton acceptor role is filled by K190. R256 is a binding site for NADPH. NADPH is bound by residues L280 and E282.

This sequence belongs to the NAD-dependent glycerol-3-phosphate dehydrogenase family.

It localises to the cytoplasm. It carries out the reaction sn-glycerol 3-phosphate + NAD(+) = dihydroxyacetone phosphate + NADH + H(+). The catalysed reaction is sn-glycerol 3-phosphate + NADP(+) = dihydroxyacetone phosphate + NADPH + H(+). It participates in membrane lipid metabolism; glycerophospholipid metabolism. Its function is as follows. Catalyzes the reduction of the glycolytic intermediate dihydroxyacetone phosphate (DHAP) to sn-glycerol 3-phosphate (G3P), the key precursor for phospholipid synthesis. This Anaplasma marginale (strain St. Maries) protein is Glycerol-3-phosphate dehydrogenase [NAD(P)+].